Consider the following 163-residue polypeptide: Deoxyuridine 5'-triphosphate nucleotidohydrolase (163 aa).

Substrate is bound by residues 78–80 (RSG), Asn-91, and 95–97 (TVD). Basic and acidic residues predominate over residues 140–151 (ERESLNETERGD). Residues 140–163 (ERESLNETERGDGGFGHTGVNSQP) are disordered.

It belongs to the dUTPase family. Requires Mg(2+) as cofactor.

It catalyses the reaction dUTP + H2O = dUMP + diphosphate + H(+). It participates in pyrimidine metabolism; dUMP biosynthesis; dUMP from dCTP (dUTP route): step 2/2. Functionally, this enzyme is involved in nucleotide metabolism: it produces dUMP, the immediate precursor of thymidine nucleotides and it decreases the intracellular concentration of dUTP so that uracil cannot be incorporated into DNA. This is Deoxyuridine 5'-triphosphate nucleotidohydrolase from Heliobacterium modesticaldum (strain ATCC 51547 / Ice1).